Here is a 506-residue protein sequence, read N- to C-terminus: MELDECSPSIFIISFIFIAISIAILRRIRPKKTKALPPGPWKLPLIGNLHQFISRDSLPYKILRDLAQKHGPLMHLQLGEVSAVVASSPEMAKVITRTKDLEFADKPAIRAIRIVTYDYLDIAFNSYGKYWREMRKIFVQELLTPKRVRSFWSAREDVFSNLVKTINSANGKSINLTKLISSTTNSIINRVALGNVPYEREIFMELIKQLLTAAGGFKLVDLFPSYKIIHVLEGTERKLWKILGKIDKILDKVIDEHRENLLRTGKGSGENGQEDIVDILLKIEDGGELDHDIPFGNNNIKALLFDIISGGSDTSSTTIDWAMSEMMKNPQVMSKAQKEIREAFNGKKKIDENDVQNLKYLKSVIQETLRLHPPAAFLMRQCREECEIGGYHIPVGTKVFINIWAMGRDPEHWPNPESFIPERFENIPYDFTGSEHQLATFPFGSGRRICPGISFGLANVELSLALLLYHFNWQLPDSSTDLDMTEAIGIAARRKYDLHLIPTSYM.

Topologically, residues 1–4 (MELD) are lumenal. A helical membrane pass occupies residues 5 to 25 (ECSPSIFIISFIFIAISIAIL). At 26 to 506 (RRIRPKKTKA…DLHLIPTSYM (481 aa)) the chain is on the cytoplasmic side. Heme is bound at residue Cys450.

This sequence belongs to the cytochrome P450 family. It depends on heme as a cofactor. Accumulates progressively in roots.

Its subcellular location is the endoplasmic reticulum membrane. It catalyses the reaction (+)-vincadifformine + reduced [NADPH--hemoprotein reductase] + O2 = (+)-minovincinine + oxidized [NADPH--hemoprotein reductase] + H2O + H(+). The protein operates within alkaloid biosynthesis. With respect to regulation, the enantiomer (-)-vincadifformine acts as a competitive inhibitor. In terms of biological role, component of the monoterpenoid indole alkaloids (MIAs, e.g. echitovenine, tabersonine, lochnericine, 19-hydroxytabersonine and horhammericine) biosynthetic pathway; MIAs are used in cancer treatment and other medical applications. Cytochrome P450 catalyzing the hydroxylation of (+)-vincadifformine to (+)-minovincinine. The protein is (+)-vincadifformine 19-hydroxylase of Catharanthus roseus (Madagascar periwinkle).